The primary structure comprises 310 residues: Ribosomal RNA small subunit methyltransferase H (310 aa).

S-adenosyl-L-methionine is bound by residues 33–35 (GGH), Asp-52, Phe-79, Asp-98, and Gln-105.

Belongs to the methyltransferase superfamily. RsmH family.

It is found in the cytoplasm. The enzyme catalyses cytidine(1402) in 16S rRNA + S-adenosyl-L-methionine = N(4)-methylcytidine(1402) in 16S rRNA + S-adenosyl-L-homocysteine + H(+). Functionally, specifically methylates the N4 position of cytidine in position 1402 (C1402) of 16S rRNA. In Campylobacter jejuni subsp. jejuni serotype O:6 (strain 81116 / NCTC 11828), this protein is Ribosomal RNA small subunit methyltransferase H.